We begin with the raw amino-acid sequence, 514 residues long: Alpha-1B adrenergic receptor (514 aa).

Topologically, residues 1–45 (MNPDLDTGHNTSAPAHWGELKDANFTGPNQTSSNSTLPQLDVTRA) are extracellular. Residues N10, N24, N29, and N34 are each glycosylated (N-linked (GlcNAc...) asparagine). A helical membrane pass occupies residues 46–69 (ISVGCLGAFILFAIVGNILVILSV). Topologically, residues 70–82 (ACNRHLRTPTNYF) are cytoplasmic. Residues 83 to 104 (IVNLAIADLLLSFTDLPFSATL) form a helical membrane-spanning segment. Residues 105 to 114 (EVLGYWVLGR) are Extracellular-facing. A helical membrane pass occupies residues 115–140 (IFCDIWAAVDVLCCTASILSLCAISI). C117 and C194 are oxidised to a cystine. Over 141-160 (DRYIGVRYSLQYPTLVTRRK) the chain is Cytoplasmic. A helical membrane pass occupies residues 161–183 (AILALLSVWVLSTVISIGPLLGW). Over 184 to 200 (KEPAPNDDKECGVTEEP) the chain is Extracellular. Residues 201 to 223 (FYALFSSLGSFYIPLAVILVMYC) form a helical membrane-spanning segment. Residues 224 to 294 (RVYIVAKRTT…FSREKKAAKT (71 aa)) are Cytoplasmic-facing. T263 is modified (phosphothreonine). Residues 295-318 (LGIVVGMFILCWLPFFIALPLGSL) traverse the membrane as a helical segment. Over 319-325 (FSTLKPP) the chain is Extracellular. A helical transmembrane segment spans residues 326–350 (DAVFKVVFWLGYFNSCLNPIIYPCS). Over 351 to 514 (SKEFKRAFMR…SNMPLAPGHF (164 aa)) the chain is Cytoplasmic. C364 carries S-palmitoyl cysteine lipidation. A Nuclear localization signal motif is present at residues 367 to 377 (RGGRRRRRRRR). Disordered stretches follow at residues 391–429 (GGSLERSQSRKDSLDDSGSCMSGSQRTLPSASPSPGYLG) and 473–514 (LGEP…PGHF). Polar residues predominate over residues 409 to 423 (SCMSGSQRTLPSASP).

It belongs to the G-protein coupled receptor 1 family. Adrenergic receptor subfamily. ADRA1B sub-subfamily. In terms of assembly, homo- and heterooligomer. Heterooligomerizes with ADRA1B homooligomers in cardiac myocytes. Interacts with CAVIN4.

It localises to the nucleus membrane. The protein resides in the cell membrane. The protein localises to the cytoplasm. It is found in the membrane. Its subcellular location is the caveola. Its function is as follows. This alpha-adrenergic receptor mediates its action by association with G proteins that activate a phosphatidylinositol-calcium second messenger system. Its effect is mediated by G(q) and G(11) proteins. Nuclear ADRA1A-ADRA1B heterooligomers regulate phenylephrine (PE)-stimulated ERK signaling in cardiac myocytes. The polypeptide is Alpha-1B adrenergic receptor (Adra1b) (Mus musculus (Mouse)).